The chain runs to 68 residues: Metallothionein-3 (68 aa).

Residue Met1 is modified to N-acetylmethionine. Residues 1–30 (MDPETCPCPSGGSCTCADSCKCEGCKCTSC) form a beta region. Residues Cys6, Cys8, Cys14, Cys16, Cys20, Cys22, Cys25, Cys27, and Cys30 each coordinate a divalent metal cation. The tract at residues 31–68 (KKSCCSCCPAECEKCAKDCVCKGGEAAEAEAEKCSCCQ) is alpha. Ser33 carries the post-translational modification Phosphoserine. The a divalent metal cation site is built by Cys34, Cys35, Cys37, Cys38, Cys42, Cys45, Cys49, Cys51, Cys64, Cys66, and Cys67.

This sequence belongs to the metallothionein superfamily. Type 1 family. As to expression, abundant in a subset of astrocytes in the normal human brain, but greatly reduced in the Alzheimer disease (AD) brain.

Functionally, binds heavy metals. Contains three zinc and three copper atoms per polypeptide chain and only a negligible amount of cadmium. Inhibits survival and neurite formation of cortical neurons in vitro. This Homo sapiens (Human) protein is Metallothionein-3 (MT3).